The chain runs to 158 residues: 6,7-dimethyl-8-ribityllumazine synthase (158 aa).

5-amino-6-(D-ribitylamino)uracil-binding positions include F22, 57 to 59 (AVE), and 81 to 83 (AVI). A (2S)-2-hydroxy-3-oxobutyl phosphate-binding site is contributed by 86–87 (GT). H89 acts as the Proton donor in catalysis. Residue F114 coordinates 5-amino-6-(D-ribitylamino)uracil. Residue R128 coordinates (2S)-2-hydroxy-3-oxobutyl phosphate.

This sequence belongs to the DMRL synthase family. As to quaternary structure, forms an icosahedral capsid composed of 60 subunits, arranged as a dodecamer of pentamers.

It carries out the reaction (2S)-2-hydroxy-3-oxobutyl phosphate + 5-amino-6-(D-ribitylamino)uracil = 6,7-dimethyl-8-(1-D-ribityl)lumazine + phosphate + 2 H2O + H(+). Its pathway is cofactor biosynthesis; riboflavin biosynthesis; riboflavin from 2-hydroxy-3-oxobutyl phosphate and 5-amino-6-(D-ribitylamino)uracil: step 1/2. Functionally, catalyzes the formation of 6,7-dimethyl-8-ribityllumazine by condensation of 5-amino-6-(D-ribitylamino)uracil with 3,4-dihydroxy-2-butanone 4-phosphate. This is the penultimate step in the biosynthesis of riboflavin. The polypeptide is 6,7-dimethyl-8-ribityllumazine synthase (Shewanella pealeana (strain ATCC 700345 / ANG-SQ1)).